The primary structure comprises 312 residues: Ribosomal RNA small subunit methyltransferase H (312 aa).

Residues 33–35 (GGH), Asp53, Phe80, Asp101, and Gln108 contribute to the S-adenosyl-L-methionine site.

The protein belongs to the methyltransferase superfamily. RsmH family.

The protein resides in the cytoplasm. The catalysed reaction is cytidine(1402) in 16S rRNA + S-adenosyl-L-methionine = N(4)-methylcytidine(1402) in 16S rRNA + S-adenosyl-L-homocysteine + H(+). In terms of biological role, specifically methylates the N4 position of cytidine in position 1402 (C1402) of 16S rRNA. In Desulfosudis oleivorans (strain DSM 6200 / JCM 39069 / Hxd3) (Desulfococcus oleovorans), this protein is Ribosomal RNA small subunit methyltransferase H.